The chain runs to 368 residues: MRPEFSAELSELDSTLTTIEKVLNPQEMSDRVRELEAQAADPSLWDDPDHAQQVTSELSHVQAELRKITDLRQRIEDLPIMVELAEEEDGDTSIAEEELADLRSLIDALEVKTMLSGEYDAREAVINIRSGAGGVDAADWAEMLMRMYTRWAEKNGHKVDIYDISYAEEAGIKSATFVVHGDYMYGQLSVEQGAHRLVRISPFDNQGRRQTSFAEVEVLPVVEKVDSIDIPDADVRVDVYRSSGPGGQSVNTTDSAVRLTHIPTGIVVTCQNEKSQIQNKASAMRVLQAKLLERKRQEERAEMDALGAGGNASWGNQMRSYVLHPYQMVKDLRTNFEVNDPQKVLDGDIDGLLEAGIRWRMAESQSAE.

N5-methylglutamine is present on Q248.

The protein belongs to the prokaryotic/mitochondrial release factor family. Methylated by PrmC. Methylation increases the termination efficiency of RF2.

The protein localises to the cytoplasm. Functionally, peptide chain release factor 2 directs the termination of translation in response to the peptide chain termination codons UGA and UAA. In Corynebacterium glutamicum (strain R), this protein is Peptide chain release factor 2.